Reading from the N-terminus, the 377-residue chain is MSVSELKERHAVATETVNNLRDQLRQRRLQLLDTDVARYSAAQGRTRVSFGATDLVCCRTLQGHTGKVYSLDWTPERNRIVSASQDGRLIVWNALTSQKTHAIKLPCAWVMTCAFSPNGQSVACGGLDSVCSIFSLSSTADKDGTVPVSRMLTGHRGYVSCCQYVPNEDAHLITSSGDQTCILWDVTTGLKTSVFGGEFQSGHTADVLSVSISGSNPNWFISGSCDSTARLWDTRAASRAVRTFHGHEGDVNTVKFFPDGYRFGTGSDDGTCRLYDIRTGHQLQVYQPHGDGENGPVTSIAFSVSGRLLFAGYASNNTCYVWDTLLGEVVLDLGLQQDSHRNRISCLGLSADGSALCTGSWDSNLKIWAFGGHRRVI.

7 WD repeats span residues 63–93 (GHTGKVYSLDWTPERNRIVSASQDGRLIVWN), 105–135 (LPCAWVMTCAFSPNGQSVACGGLDSVCSIFS), 154–185 (GHRGYVSCCQYVPNEDAHLITSSGDQTCILWD), 202–233 (GHTADVLSVSISGSNPNWFISGSCDSTARLWD), 246–276 (GHEGDVNTVKFFPDGYRFGTGSDDGTCRLYD), 292–323 (GENGPVTSIAFSVSGRLLFAGYASNNTCYVWD), and 339–369 (SHRNRISCLGLSADGSALCTGSWDSNLKIWA). 2 consecutive short sequence motifs (DWD box) follow at residues 220–235 (FISGSCDSTARLWDTR) and 263–278 (FGTGSDDGTCRLYDIR).

It belongs to the WD repeat G protein beta family. In terms of assembly, g proteins are composed of 3 units, alpha, beta and gamma. Interacts with the gamma subunits GG1 and GG2. The dimers GB1-GG1 and GB1-GG2 interact with NDL1, NDL2 and NDL3. Interacts with WNK8. Interacts with XLG2. Interacts with RACK1A, RACK1B and RACK1C. Interacts with ZAR1 (via GBeta-binding domain). As to expression, expressed in seedlings (especially at the hypocotyl/root junction), roots, leaves (restricted to veins and guard cells), and flowers. Also present in hydathods. Expressed in guard cells, mesophyll tissue of cotyledons, trichomes and whole siliques, but not in seeds.

Its subcellular location is the cell membrane. It localises to the cytoplasm. It is found in the nucleus. Guanine nucleotide-binding proteins (G proteins) are involved as a modulator or transducer in various transmembrane signaling systems. The beta and gamma chains are required for the GTPase activity, for replacement of GDP by GTP, and for G protein-effector interaction. The heterotrimeric G-protein controls defense responses to necrotrophic and vascular fungi probably by modulating cell wall-related genes expression (e.g. lower xylose content in cell walls); involved in resistance to fungal pathogens such as Alternaria brassicicola and Fusarium oxysporum. Modulates root architecture (e.g. lateral root formation). Acts with XGL3 in the positive regulation of root waving and root skewing. Involved in the asymmetric division of zygote and specification of apical and basal cell lineages. This chain is Guanine nucleotide-binding protein subunit beta (GB1), found in Arabidopsis thaliana (Mouse-ear cress).